The primary structure comprises 71 residues: UPF0346 protein SPP_0954 (71 aa).

This sequence belongs to the UPF0346 family.

This is UPF0346 protein SPP_0954 from Streptococcus pneumoniae (strain P1031).